The following is an 83-amino-acid chain: Lipolysis-activating peptide 1-alpha chain (83 aa).

The N-terminal stretch at 1–21 (MNIILFYFMPILISLPGLLAS) is a signal peptide. The 62-residue stretch at 22–83 (GTYPNDVYGL…LFWDVYKEHC (62 aa)) folds into the LCN-type CS-alpha/beta domain. 3 cysteine pairs are disulfide-bonded: C35–C58, C44–C63, and C48–C65.

Belongs to the long (3 C-C) scorpion toxin superfamily. Monomer (edited version) and heterodimer (non-edited version) of this alpha chain and a beta chain (AC P0CI43). Expressed by the venom gland.

Its subcellular location is the secreted. In terms of biological role, the heterodimer non-edited LVP1 induces lipolysis in rat adipocytes. Induction of lipolysis by LVP1 appears to be mediated through the beta-2 adrenergic receptor pathway (ADRB2). Functionally, the edited BmKBTx-like, similar to beta-toxins, may modulate voltage-gated sodium channels (Nav) and may block voltage-gated potassium channels (Kv). The polypeptide is Lipolysis-activating peptide 1-alpha chain (Lychas mucronatus (Chinese swimming scorpion)).